The primary structure comprises 230 residues: Modulator of macroautophagy TMEM150B (230 aa).

Position 1 (Met-1) is a topological domain, cytoplasmic. The chain crosses the membrane as a helical span at residues 2–22 (WAWALLPICLTIWATAGIWIV). At 23–50 (YGMSVSNGSVNLTDGFPFISLCGTYPPQ) the chain is on the extracellular side. Asn-29 and Asn-33 each carry an N-linked (GlcNAc...) asparagine glycan. Residues 51-71 (SCVFGQVLNVGAMLGVWISVI) traverse the membrane as a helical segment. The Cytoplasmic portion of the chain corresponds to 72-83 (RFQQIRDYGCHS). The chain crosses the membrane as a helical span at residues 84–104 (VLNSVSLAMGLLCALGTSIVG). The Extracellular portion of the chain corresponds to 105-115 (NFQQSNQLETH). A helical transmembrane segment spans residues 116–136 (LAGAFLAFVIGNIYFWMQTVL). Topologically, residues 137–150 (TYMVKPKHGGCYIG) are cytoplasmic. Residues 151–171 (PIRFCLSVACTALIVLMAVFL) form a helical membrane-spanning segment. Over 172–183 (KLNMKSISAICE) the chain is Extracellular. The helical transmembrane segment at 184-204 (WIVAMILFLLYGLFSVDFWHL) threads the bilayer. Topologically, residues 205–230 (DGHYFHVKKRTAIPNEVEVSTVTLNI) are cytoplasmic.

Belongs to the DRAM/TMEM150 family.

The protein localises to the cell membrane. It is found in the endosome membrane. It localises to the cytoplasmic vesicle. The protein resides in the autophagosome membrane. In terms of biological role, modulator of macroautophagy that causes accumulation of autophagosomes under basal conditions and enhances autophagic flux. Represses cell death and promotes long-term clonogenic survival of cells grown in the absence of glucose in a macroautophagy-independent manner. May have some role in extracellular matrix engulfment or growth factor receptor recycling, both of which can modulate cell survival. This is Modulator of macroautophagy TMEM150B from Xenopus tropicalis (Western clawed frog).